Consider the following 41-residue polypeptide: Photosystem I reaction center subunit VIII (41 aa).

A helical membrane pass occupies residues 12-32; it reads WIMIPVTCWLFPVVVMGLLFI.

The protein belongs to the PsaI family.

The protein localises to the cellular thylakoid membrane. In terms of biological role, may help in the organization of the PsaL subunit. In Cyanothece sp. (strain PCC 7425 / ATCC 29141), this protein is Photosystem I reaction center subunit VIII.